A 477-amino-acid polypeptide reads, in one-letter code: Serine/threonine-protein kinase pakC (477 aa).

The PH domain maps to 13–108 (SPDKEGELKK…WMKAVEKGSE (96 aa)). The 14-residue stretch at 112–125 (VSQPFNLKHEVHVD) folds into the CRIB domain. Positions 204–458 (YKNMTKIGEG…ATDLLKHPFM (255 aa)) constitute a Protein kinase domain. ATP-binding positions include 210–218 (IGEGAAGEV) and Lys233. The Proton acceptor role is filled by Asp326.

The protein belongs to the protein kinase superfamily. STE Ser/Thr protein kinase family. STE20 subfamily. As to quaternary structure, interacts with GTP-bound racB. Mg(2+) is required as a cofactor.

It is found in the cytoplasm. The protein localises to the membrane. It carries out the reaction L-seryl-[protein] + ATP = O-phospho-L-seryl-[protein] + ADP + H(+). The catalysed reaction is L-threonyl-[protein] + ATP = O-phospho-L-threonyl-[protein] + ADP + H(+). Its activity is regulated as follows. Kinase activity is rapidly and transiently increased in response to chemoattractant stimulation. Has role in the regulation of chemotaxis. The sequence is that of Serine/threonine-protein kinase pakC (pakC) from Dictyostelium discoideum (Social amoeba).